The primary structure comprises 274 residues: MSYSALEAAIEAAWEARDTITPATKGEARDAVEATLEALDKGSLRVAEKRGADWHVNQWAKKAVLLGFRLKDMDVQTGGPQGGTWWDKVDSKFAQWGEAQWKAAGFRAVPNCIVRRSAYIAKGVVLMPSFVNLGAYVDEGTMVDTWATVGSCAQIGKNVHLSGGVGIGGVLEPMQAGPTIIEDNCFIGARSEVVEGCIVREGSVLGMGVFIGKSTKIVDRETGEVMYGEVPAGSVVVAGSMPSKGGVNLYCAVIVKRVDAQTRSKTSINELLRD.

2 residues coordinate substrate: arginine 107 and aspartate 144.

Belongs to the transferase hexapeptide repeat family. In terms of assembly, homotrimer.

The protein localises to the cytoplasm. It catalyses the reaction (S)-2,3,4,5-tetrahydrodipicolinate + succinyl-CoA + H2O = (S)-2-succinylamino-6-oxoheptanedioate + CoA. It functions in the pathway amino-acid biosynthesis; L-lysine biosynthesis via DAP pathway; LL-2,6-diaminopimelate from (S)-tetrahydrodipicolinate (succinylase route): step 1/3. The polypeptide is 2,3,4,5-tetrahydropyridine-2,6-dicarboxylate N-succinyltransferase (Cereibacter sphaeroides (strain ATCC 17025 / ATH 2.4.3) (Rhodobacter sphaeroides)).